Consider the following 430-residue polypeptide: uncharacterized protein (430 aa).

An N-terminal signal peptide occupies residues 1–19; sequence MKILLFVVLFFNVLVGIYS. N-linked (GlcNAc...) asparagine glycosylation is present at asparagine 39. Residues 119–408 form a disordered region; it reads LDPNSSPSPS…ELLEKNSDGN (290 aa). The segment covering 124–168 has biased composition (pro residues); it reads SPSPSPSPSPSPSPSPSPSPSPSPSPSPSPSPSPSPSPSPSPSPS. Low complexity-rich tracts occupy residues 169–253 and 263–285; these read PSSS…TPSQ and PTPTQTPSQTPTQTQTPTPTQTP. Residues 286 to 303 show a composition bias toward polar residues; that stretch reads ISSRPMSISTEKPSSSEE. The N-linked (GlcNAc...) asparagine glycan is linked to asparagine 312. Over residues 316-325 the composition is skewed to basic and acidic residues; that stretch reads SEDKKKDSES. Over residues 326–370 the composition is skewed to low complexity; the sequence is KSSQSESPSPSASASESESASESASASTSVSVSASPLPIMDSSSS. The N-linked (GlcNAc...) asparagine glycan is linked to asparagine 408.

It localises to the secreted. This is an uncharacterized protein from Dictyostelium discoideum (Social amoeba).